The primary structure comprises 337 residues: AVSASPVLTLPNDIQVQENFDLSRIYGKWFHVAVGSTCPWLKRFKDKMTMGTLMLGEGATEREISVTKTHRRKGICEVISGAYEKTSTDGKFLYHKSKWNITMESYVVHTNYDEYAIFLTKKFSRRHGPTLTAKLYGREPQLRESLLEEFREVALGVGIPEDSIFTMPDRGECVPGEQEPEPTLLSRARRAVLPQEEEGSGAGQPVADFSKKEDSCQLGYSQGPCLGMIKRYFYNGSSMACETFHYGGCMGNGNNFVSEKECLQTCRTVEACSLPIVSGPCRGFFQLWAFDAVQGKCVLFNYGGCQGNGNQFYSEKECKEYCGVPGEEDEELLRSSN.

The first 4 residues, 1 to 4, serve as a signal peptide directing secretion; the sequence is AVSA. Residues Cys38 and Lys96 each contribute to the 3-hydroxy-L-kynurenine site. Cys76 and Cys173 form a disulfide bridge. An N-linked (GlcNAc...) asparagine glycan is attached at Asn100. 3-hydroxy-L-kynurenine contacts are provided by Lys122 and Lys134. The O-linked (Xyl...) (chondroitin sulfate) serine glycan is linked to Ser200. 6 cysteine pairs are disulfide-bonded: Cys216/Cys266, Cys225/Cys249, Cys241/Cys262, Cys272/Cys322, Cys281/Cys305, and Cys297/Cys318. BPTI/Kunitz inhibitor domains follow at residues 216–266 and 272–322; these read CQLG…LQTC and CSLP…KEYC. Asn235 carries N-linked (GlcNAc...) asparagine glycosylation.

It in the N-terminal section; belongs to the calycin superfamily. Lipocalin family. As to quaternary structure, monomer. Homodimer. In plasma, it occurs as a monomer or dimer and in covalently-linked complexes with immunoglobulin A (IgA), ALB/albumin and F2/prothrombin. Chromophore-bound alpha-1-microglobulin interacts with the constant region of immunoglobulin A. Chromophore-bound alpha-1-microglobulin interacts with ALB with molar ratio 2:1 and 1:1; this interaction does not prevent fatty acid binding to ALB. Interacts with F2/prothrombin (via N-terminus) with molar ratio 2:1 and 1:1; this interaction does not prevent the activation of prothrombin to thrombin. Interacts with NDUFAB1, a subunit of mitochondrial complex I. Interacts with FN1. I-alpha-I plasma protease inhibitors are assembled from one or two heavy chains (HC) and one light chain, bikunin. Inter-alpha-inhibitor (I-alpha-I) is composed of ITIH1/HC1, ITIH2/HC2 and bikunin, and pre-alpha-inhibitor (P-alpha-I) of ITIH3/HC3 and bikunin. Interacts with TNFAIP6 (via Link domain). In terms of assembly, monomer. Also occurs as a complex with tryptase in mast cells. The precursor is proteolytically processed into separately functioning proteins. In terms of processing, proteolytically cleaved in the presence of oxyhemoglobin or MPO. Post-translationally, 3-hydroxykynurenine, an oxidized tryptophan metabolite that is common in biological fluids, reacts with Cys-53, Lys-111, Lys-137, and Lys-149 to form heterogeneous polycyclic chromophores including hydroxanthommatin. The reaction by alpha-1-microglobulin is autocatalytic; the human protein forms chromophore even when expressed in insect and bacterial cells. The chromophore can react with accessible cysteines forming non-reducible thioether cross-links with other molecules of alpha-1-microglobulin or with other proteins such as Ig alpha-1 chain C region 'Cys-352'. Heavy chains are interlinked with bikunin via a chondroitin 4-sulfate bridge to the C-terminal aspartate. In terms of processing, proteolytically cleaved by PRSS3 at Kunitz domain 2. Expressed by the liver and secreted in plasma.

The protein resides in the secreted. Its subcellular location is the endoplasmic reticulum. The protein localises to the cytoplasm. It is found in the cytosol. It localises to the cell membrane. The protein resides in the nucleus membrane. Its subcellular location is the mitochondrion inner membrane. The protein localises to the extracellular space. It is found in the extracellular matrix. Its function is as follows. Antioxidant and tissue repair protein with reductase, heme-binding and radical-scavenging activities. Removes and protects against harmful oxidants and repairs macromolecules in intravascular and extravascular spaces and in intracellular compartments. Intravascularly, plays a regulatory role in red cell homeostasis by preventing heme- and reactive oxygen species-induced cell damage. Binds and degrades free heme to protect fetal and adult red blood cells from hemolysis. Reduces extracellular methemoglobin, a Fe3+ (ferric) form of hemoglobin that cannot bind oxygen, back to the Fe2+ (ferrous) form deoxyhemoglobin, which has oxygen-carrying potential. Upon acute inflammation, inhibits oxidation of low-density lipoprotein particles by MPO and limits vascular damage. Extravascularly, protects from oxidation products formed on extracellular matrix structures and cell membranes. Catalyzes the reduction of carbonyl groups on oxidized collagen fibers and preserves cellular and extracellular matrix ultrastructures. Importantly, counteracts the oxidative damage at blood-placenta interface, preventing leakage of free fetal hemoglobin into the maternal circulation. Intracellularly, has a role in maintaining mitochondrial redox homeostasis. Bound to complex I of the respiratory chain of mitochondria, may scavenge free radicals and preserve mitochondrial ATP synthesis. Protects renal tubule epithelial cells from heme-induced oxidative damage to mitochondria. Reduces cytochrome c from Fe3+ (ferric) to the Fe2+ (ferrous) state through formation of superoxide anion radicals in the presence of ascorbate or NADH/NADPH electron donor cofactors, ascorbate being the preferred cofactor. Has a chaperone role in facilitating the correct folding of bikunin in the endoplasmic reticulum compartment. In terms of biological role, kunitz-type serine protease inhibitor and structural component of extracellular matrix with a role in extracellular space remodeling and cell adhesion. Among others, has antiprotease activity toward kallikrein, a protease involved in airway inflammation; inhibits GZMK/granzyme, a granule-stored serine protease involved in NK and T cell cytotoxic responses; and inhibits PLG/plasmin, a protease required for activation of matrix metalloproteinases. As part of I-alpha-I complex, provides for the heavy chains to be transferred from I-alpha-I complex to hyaluronan in the presence of TNFAIP6, in a dynamic process that releases free bikunin and remodels extracellular matrix proteoglycan structures. Free bikunin, but not its heavy chain-bound form, acts as a potent protease inhibitor in airway secretions. Part of hyaluronan-rich extracellular matrix that surrounds oocyte during cumulus oophorus expansion, an indispensable process for proper ovulation. Also inhibits calcium oxalate crystallization. Functionally, kunitz-type serine protease inhibitor. Has high catalytic efficiency for F10/blood coagulation factor Xa and may act as an anticoagulant by inhibiting prothrombin activation. Inhibits trypsin and mast cell CMA1/chymase and tryptase proteases. This chain is Protein AMBP (AMBP), found in Sus scrofa (Pig).